The sequence spans 594 residues: CRISPR-associated DNA-binding protein Cas12m (594 aa).

Residues 1 to 85 (MSRLEARTRY…EKVRQVMVFE (85 aa)) are recognition domain (REC1-N). The segment at 86–153 (SETTKKIKEL…ERSFIFEARK (68 aa)) is recognition domain (REC2). The tract at residues 154-211 (QELAQLEKERWAVVKELGKGSGLYWCNLEDVVNSYDIGRKKAKAAGGEMRFHRWDGTG) is recognition domain (REC1-C). The segment at 212–314 (KVTVRFQKGL…RYKLNLVLEI (103 aa)) is wedge domain (WED). The tract at residues 315–329 (LGENTNRILPALEGT) is linker. Positions 330-540 (AAIDLGWRTV…KNHVEFTYVP (211 aa)) are ruvC-I. The segment at 541–575 (AENTTITCHKCGHKEKFDAAAQIIHTCSTCGELWD) is target nucleic-acid binding (TNB). Residues Cys548, Cys551, Cys567, and Cys570 each contribute to the Zn(2+) site. Residues 576–594 (QDYNAAKNLLAFSQKGGVK) are ruvC-II. Residue Asp577 participates in Mg(2+) binding.

This sequence belongs to the CRISPR-associated DNA-binding protein Cas12m family. The cofactor is Mg(2+). Zn(2+) is required as a cofactor.

Functionally, CRISPR (clustered regularly interspaced short palindromic repeat), is an adaptive immune system that provides protection against mobile genetic elements (viruses, transposable elements and conjugative plasmids). CRISPR clusters contain sequences complementary to antecedent mobile elements and target invading nucleic acids. CRISPR clusters are transcribed and processed into CRISPR RNA (crRNA). Recognizes a short motif in the CRISPR repeat sequences (the 5' PAM or protospacer adjacent motif, 5'-C/TCN-3' in this organism) to help distinguish self versus nonself, as targets within the bacterial CRISPR locus do not have PAMs. Upon expression in E.coli as a CRISPR locus inhibits plasmid propagation when targeted to regions essential for plasmid propagation (replication origin but not a selectable marker), probably by inhibiting transcription. Cas12m-crRNA binds DNA in a PAM-dependent, crRNA-guided fashion. Upon expression in E.coli as a CRISPR region preferentially binds to its associated crRNA. Probably required for pre-crRNA processing to mature crRNA. The sequence is that of CRISPR-associated DNA-binding protein Cas12m from Thermanaerosceptrum fracticalcis.